We begin with the raw amino-acid sequence, 271 residues long: Uridine-cytidine kinase 1-A (271 aa).

An ATP-binding site is contributed by 24–32; sequence GGTASGKST. The substrate site is built by aspartate 81, tyrosine 109, histidine 114, arginine 163, arginine 172, and glutamine 180. ATP is bound at residue aspartate 209. The disordered stretch occupies residues 241-271; the sequence is SQKRTFPGQGESGGLILPGKRTHLESSSRPH. The span at 262–271 shows a compositional bias: basic and acidic residues; the sequence is THLESSSRPH.

Belongs to the uridine kinase family.

The enzyme catalyses uridine + ATP = UMP + ADP + H(+). The catalysed reaction is cytidine + ATP = CMP + ADP + H(+). Its pathway is pyrimidine metabolism; CTP biosynthesis via salvage pathway; CTP from cytidine: step 1/3. It participates in pyrimidine metabolism; UMP biosynthesis via salvage pathway; UMP from uridine: step 1/1. Its function is as follows. Phosphorylates uridine and cytidine to uridine monophosphate and cytidine monophosphate. Does not phosphorylate deoxyribonucleosides or purine ribonucleosides. Can use ATP or GTP as a phosphate donor. In Xenopus laevis (African clawed frog), this protein is Uridine-cytidine kinase 1-A (uck1-a).